Consider the following 123-residue polypeptide: Large ribosomal subunit protein uL29 (123 aa).

The protein belongs to the universal ribosomal protein uL29 family.

The chain is Large ribosomal subunit protein uL29 (RPL35) from Theileria parva (East coast fever infection agent).